The primary structure comprises 325 residues: D site-binding protein (325 aa).

Disordered regions lie at residues 1–98 (MARP…AGPS), 124–203 (LEHG…EVLM), and 230–256 (FSEEELKPQPIMKKARKVQVPEEQKDE). Gly residues predominate over residues 17 to 28 (GPAGAPPGGGAL). The segment covering 71–80 (AGPADAPSGA) has biased composition (low complexity). The residue at position 86 (Ser-86) is a Phosphoserine. Residues 88-98 (RGRSGPVAGPS) are compositionally biased toward low complexity. Residues 129–153 (PPSPPPPGGLSPAPSPARTPAPSPG) are compositionally biased toward pro residues. Residues 154 to 171 (PGSCSSSSPRSSPGHAPA) show a composition bias toward low complexity. Positions 255–318 (DEKYWSRRYK…SHYRAVLSRY (64 aa)) constitute a bZIP domain. The segment at 257 to 279 (KYWSRRYKNNEAAKRSRDARRLK) is basic motif. A leucine-zipper region spans residues 283 to 297 (ISVRAAFLEKENALL).

It belongs to the bZIP family. PAR subfamily. Binds DNA as a homodimer or a heterodimer. Can form a heterodimer with TEF. In terms of tissue distribution, expressed in the suprachiasmatic nuclei (SCN) and in most peripheral tissues, with a strong circadian rhythmicity.

It localises to the nucleus. Functionally, this transcriptional activator recognizes and binds to the sequence 5'-RTTAYGTAAY-3' found in the promoter of genes such as albumin, CYP2A4 and CYP2A5. It is not essential for circadian rhythm generation, but modulates important clock output genes. May be a direct target for regulation by the circadian pacemaker component clock. May affect circadian period and sleep regulation. The chain is D site-binding protein (Dbp) from Mus musculus (Mouse).